The following is a 997-amino-acid chain: uncharacterized protein (997 aa).

This sequence belongs to the MG414/MG415 family.

This is an uncharacterized protein from Mycoplasma pneumoniae (strain ATCC 29342 / M129 / Subtype 1) (Mycoplasmoides pneumoniae).